The chain runs to 393 residues: Sulfate adenylyltransferase (393 aa).

The protein belongs to the sulfate adenylyltransferase family.

It catalyses the reaction sulfate + ATP + H(+) = adenosine 5'-phosphosulfate + diphosphate. Its pathway is sulfur metabolism; hydrogen sulfide biosynthesis; sulfite from sulfate: step 1/3. The chain is Sulfate adenylyltransferase from Synechococcus sp. (strain JA-3-3Ab) (Cyanobacteria bacterium Yellowstone A-Prime).